A 198-amino-acid chain; its full sequence is Dynein axonemal light chain 1 (198 aa).

LRR repeat units follow at residues 49-70 (ACKHLALSTNNIEKISSLSGME), 71-92 (NLRILSLGRNLIKKIENLDAVA), 94-115 (TLEELWISYNQIASLSGIEKLV), and 116-137 (NLRVLYMSNNKITNWGEIDKLA). Residues 157-195 (KENNATSEYRIEVVKRLPNLKKLDGMPVDVDEREQANVA) form the LRRCT domain.

It belongs to the dynein light chain LC1-type family. As to quaternary structure, interacts with OCAD2, a outer arm dynein heavy chain. Interacts with tubulin (previously called p45) located within the A-tubule of the outer doublets in a ATP-independent manner.

The protein localises to the cytoplasm. It is found in the cytoskeleton. Its subcellular location is the flagellum axoneme. In terms of biological role, part of the multisubunit axonemal ATPase complexes that generate the force for flagellar motility and govern beat frequency. Component of the outer arm dynein (ODA). May be involved in a mechanosensory feedback mechanism controlling ODA activity based on external conformational cues by tethering the outer arm dynein heavy chain (ODA2) to the A-tubule of the outer doublet microtubules within the axoneme. The polypeptide is Dynein axonemal light chain 1 (Chlamydomonas reinhardtii (Chlamydomonas smithii)).